Reading from the N-terminus, the 255-residue chain is 5-oxoprolinase subunit A (255 aa).

The protein belongs to the LamB/PxpA family. Forms a complex composed of PxpA, PxpB and PxpC.

It catalyses the reaction 5-oxo-L-proline + ATP + 2 H2O = L-glutamate + ADP + phosphate + H(+). In terms of biological role, catalyzes the cleavage of 5-oxoproline to form L-glutamate coupled to the hydrolysis of ATP to ADP and inorganic phosphate. The chain is 5-oxoprolinase subunit A from Rhodopseudomonas palustris (strain BisB18).